The chain runs to 182 residues: Vomeronasal secretory protein 1 (182 aa).

An N-terminal signal peptide occupies residues 1–18 (MRALLLIISFCLVAVLQA). A glycan (N-linked (GlcNAc...) asparagine) is linked at asparagine 30. An intrachain disulfide couples cysteine 76 to cysteine 168.

This sequence belongs to the calycin superfamily. Lipocalin family. Specifically expressed in vomeronasal and posterior glands of the nasal septum, the ducts of which open into the lumen of the vomeronasal organ.

Its subcellular location is the secreted. Transport of lipophilic molecules, possible pheromone-carrier. The chain is Vomeronasal secretory protein 1 (Lcn3) from Mus musculus (Mouse).